Consider the following 126-residue polypeptide: Small ribosomal subunit protein uS12m (126 aa).

Positions 1–11 (MATSNQMGANT) are enriched in polar residues. Residues 1–21 (MATSNQMGANTRSKKKKKNLK) form a disordered region. Over residues 12 to 21 (RSKKKKKNLK) the composition is skewed to basic residues.

Belongs to the universal ribosomal protein uS12 family.

Its subcellular location is the mitochondrion. Functionally, protein S12 is involved in the translation initiation step. This chain is Small ribosomal subunit protein uS12m (RPS12), found in Bigelowiella natans (Pedinomonas minutissima).